The primary structure comprises 346 residues: MSGNNSSLSYKDAGVDIDAGNALVDRIKGVVKRTHRPEVMGGIGGFGALCSLPTKYKEPILVSGTDGVGTKLRLAMDLNKHDTIGIDLVAMCVNDLIVQGGEPLFFLDYYATGKLDVDTAASVVAGIGEGCIQAGCALIGGETAEMPGMYHGEDYDVAGFCVGVVEKADIIDGSKVQAGDALIAVGSSGPHSNGYSLVRKIIEVSNADLNEELEGKSLADHLLTPTKIYVKSTLKMMESCDVHAISHITGGGFWENIPRVLPEGAKAVVDGNSWQWPAIFNWLQTAGNVETYEMYRTFNCGVGLVIALPQAQAEQAIEILKAEGENAWLLGSIANAEVGEEQVEIK.

Belongs to the AIR synthase family.

Its subcellular location is the cytoplasm. The enzyme catalyses 2-formamido-N(1)-(5-O-phospho-beta-D-ribosyl)acetamidine + ATP = 5-amino-1-(5-phospho-beta-D-ribosyl)imidazole + ADP + phosphate + H(+). The protein operates within purine metabolism; IMP biosynthesis via de novo pathway; 5-amino-1-(5-phospho-D-ribosyl)imidazole from N(2)-formyl-N(1)-(5-phospho-D-ribosyl)glycinamide: step 2/2. This Photobacterium profundum (strain SS9) protein is Phosphoribosylformylglycinamidine cyclo-ligase.